The sequence spans 85 residues: uncharacterized protein (85 aa).

This is an uncharacterized protein from Acidithiobacillus ferrooxidans (Thiobacillus ferrooxidans).